A 358-amino-acid polypeptide reads, in one-letter code: Probable dual-specificity RNA methyltransferase RlmN 1 (358 aa).

Positions 101–326 (MQAGGTLCIS…REKGFYTLLR (226 aa)) constitute a Radical SAM core domain. The cysteines at positions 108 and 337 are disulfide-linked. Positions 115, 119, and 122 each coordinate [4Fe-4S] cluster. S-adenosyl-L-methionine-binding positions include 162-163 (GE), S194, 218-220 (SLN), and N294. C337 serves as the catalytic S-methylcysteine intermediate.

The protein belongs to the radical SAM superfamily. RlmN family. [4Fe-4S] cluster is required as a cofactor.

It is found in the cytoplasm. It carries out the reaction adenosine(2503) in 23S rRNA + 2 reduced [2Fe-2S]-[ferredoxin] + 2 S-adenosyl-L-methionine = 2-methyladenosine(2503) in 23S rRNA + 5'-deoxyadenosine + L-methionine + 2 oxidized [2Fe-2S]-[ferredoxin] + S-adenosyl-L-homocysteine. The catalysed reaction is adenosine(37) in tRNA + 2 reduced [2Fe-2S]-[ferredoxin] + 2 S-adenosyl-L-methionine = 2-methyladenosine(37) in tRNA + 5'-deoxyadenosine + L-methionine + 2 oxidized [2Fe-2S]-[ferredoxin] + S-adenosyl-L-homocysteine. Its function is as follows. Specifically methylates position 2 of adenine 2503 in 23S rRNA and position 2 of adenine 37 in tRNAs. The chain is Probable dual-specificity RNA methyltransferase RlmN 1 from Protochlamydia amoebophila (strain UWE25).